The following is an 84-amino-acid chain: MVVIRLARGGSKKRPFFNIVATDSRNRRDGRFIERVGFYNPLATEGEEGLRLAQDRLAYWQGVGAQLSPTVARLVKQGAAKAAA.

It belongs to the bacterial ribosomal protein bS16 family.

The protein is Small ribosomal subunit protein bS16 of Cupriavidus necator (strain ATCC 17699 / DSM 428 / KCTC 22496 / NCIMB 10442 / H16 / Stanier 337) (Ralstonia eutropha).